The primary structure comprises 674 residues: ATP-citrate synthase subunit 1 (674 aa).

Over residues 1–10 (MPSATSTNGA) the composition is skewed to low complexity. Positions 1–26 (MPSATSTNGANGNGNGNGASASPAPG) are disordered. ATP contacts are provided by residues 261 to 281 (LLRY…EVGG) and 312 to 338 (FKTE…KNKS). A Mg(2+)-binding site is contributed by Glu278. His320 serves as the catalytic Tele-phosphohistidine intermediate. Position 339–349 (339–349 (MREAGFYVPDT)) interacts with CoA.

This sequence belongs to the succinate/malate CoA ligase alpha subunit family. Composed of two subunits.

The protein localises to the cytoplasm. It catalyses the reaction oxaloacetate + acetyl-CoA + ADP + phosphate = citrate + ATP + CoA. Its function is as follows. Catalyzes the formation of cytosolic acetyl-CoA, which is mainly used for the biosynthesis of fatty acids and sterols. In Sordaria macrospora (strain ATCC MYA-333 / DSM 997 / K(L3346) / K-hell), this protein is ATP-citrate synthase subunit 1 (ACL1).